Consider the following 211-residue polypeptide: Small ribosomal subunit protein uS3 (211 aa).

Residues 16–85 (IDEYFKTKLV…NPQIEVKQVE (70 aa)) form the KH type-2 domain.

This sequence belongs to the universal ribosomal protein uS3 family. As to quaternary structure, part of the 30S ribosomal subunit.

Its function is as follows. Binds the lower part of the 30S subunit head. This is Small ribosomal subunit protein uS3 from Methanococcus maripaludis (strain C5 / ATCC BAA-1333).